The following is a 221-amino-acid chain: GTP cyclohydrolase III (221 aa).

It belongs to the archaeal-type GTP cyclohydrolase family.

It carries out the reaction GTP + 3 H2O = 2-amino-5-formylamino-6-(5-phospho-D-ribosylamino)pyrimidin-4(3H)-one + 2 phosphate + 2 H(+). Catalyzes the formation of 2-amino-5-formylamino-6-ribofuranosylamino-4(3H)-pyrimidinone ribonucleotide monophosphate and inorganic phosphate from GTP. Also has an independent pyrophosphate phosphohydrolase activity. The sequence is that of GTP cyclohydrolase III from Pyrobaculum aerophilum (strain ATCC 51768 / DSM 7523 / JCM 9630 / CIP 104966 / NBRC 100827 / IM2).